The chain runs to 84 residues: MLGIDVKKTNEELIISWQIAKVQIPLSEIIEVTEDETYAGVEEENVIRIGTAYATTDRILIRTVKQNYLLFTTNKVAILNKINA.

Belongs to the UPF0457 family.

This Bacillus cereus (strain ZK / E33L) protein is UPF0457 protein BCE33L2961.